A 392-amino-acid polypeptide reads, in one-letter code: Succinyl-diaminopimelate desuccinylase (392 aa).

Residue His-75 coordinates Zn(2+). The active site involves Asp-77. A Zn(2+)-binding site is contributed by Asp-108. Glu-147 functions as the Proton acceptor in the catalytic mechanism. Positions 148, 176, and 365 each coordinate Zn(2+).

This sequence belongs to the peptidase M20A family. DapE subfamily. In terms of assembly, homodimer. The cofactor is Zn(2+). Co(2+) serves as cofactor.

It carries out the reaction N-succinyl-(2S,6S)-2,6-diaminopimelate + H2O = (2S,6S)-2,6-diaminopimelate + succinate. The protein operates within amino-acid biosynthesis; L-lysine biosynthesis via DAP pathway; LL-2,6-diaminopimelate from (S)-tetrahydrodipicolinate (succinylase route): step 3/3. Functionally, catalyzes the hydrolysis of N-succinyl-L,L-diaminopimelic acid (SDAP), forming succinate and LL-2,6-diaminopimelate (DAP), an intermediate involved in the bacterial biosynthesis of lysine and meso-diaminopimelic acid, an essential component of bacterial cell walls. The chain is Succinyl-diaminopimelate desuccinylase from Rhodopseudomonas palustris (strain BisB18).